A 709-amino-acid polypeptide reads, in one-letter code: Meiotic sister-chromatid recombination protein 6, mitochondrial (709 aa).

Residues Met1–Leu29 constitute a mitochondrion transit peptide.

The protein localises to the mitochondrion. In terms of biological role, may be involved in the control of meiotic sister-chromatid recombination. This Candida glabrata (strain ATCC 2001 / BCRC 20586 / JCM 3761 / NBRC 0622 / NRRL Y-65 / CBS 138) (Yeast) protein is Meiotic sister-chromatid recombination protein 6, mitochondrial (MSC6).